Consider the following 162-residue polypeptide: HTH-type transcriptional regulator IscR (162 aa).

Residues 2-131 enclose the HTH rrf2-type domain; it reads RLTSKGRYAV…NNITLGELVN (130 aa). The segment at residues 28 to 51 is a DNA-binding region (H-T-H motif); sequence LADISERQGISLSYLEQLFSRLRK. 3 residues coordinate [2Fe-2S] cluster: Cys92, Cys98, and Cys104. Positions 140–162 are disordered; it reads GRQHTHDAPRTRTQDAIDVKLRA. A compositionally biased stretch (basic and acidic residues) spans 143-162; sequence HTHDAPRTRTQDAIDVKLRA.

Requires [2Fe-2S] cluster as cofactor.

Regulates the transcription of several operons and genes involved in the biogenesis of Fe-S clusters and Fe-S-containing proteins. The polypeptide is HTH-type transcriptional regulator IscR (Shigella flexneri).